A 411-amino-acid polypeptide reads, in one-letter code: Short chain dehydrogenase ausT (411 aa).

Asp105, Gln137, Tyr249, and Arg253 together coordinate NADP(+). Residue Tyr249 is the Proton donor of the active site. Tyr263 serves as the catalytic Proton donor.

This sequence belongs to the short-chain dehydrogenases/reductases (SDR) family.

It participates in secondary metabolite biosynthesis; terpenoid biosynthesis. In terms of biological role, short chain dehydrogenase; part of the gene cluster that mediates the biosynthesis of calidodehydroaustin, a fungal meroterpenoid. The first step of the pathway is the synthesis of 3,5-dimethylorsellinic acid by the polyketide synthase ausA. 3,5-dimethylorsellinic acid is then prenylated by the polyprenyl transferase ausN. Further epoxidation by the FAD-dependent monooxygenase ausM and cyclization by the probable terpene cyclase ausL lead to the formation of protoaustinoid A. Protoaustinoid A is then oxidized to spiro-lactone preaustinoid A3 by the combined action of the FAD-binding monooxygenases ausB and ausC, and the dioxygenase ausE. Acid-catalyzed keto-rearrangement and ring contraction of the tetraketide portion of preaustinoid A3 by ausJ lead to the formation of preaustinoid A4. The aldo-keto reductase ausK, with the help of ausH, is involved in the next step by transforming preaustinoid A4 into isoaustinone which is in turn hydroxylated by the P450 monooxygenase ausI to form austinolide. The cytochrome P450 monooxygenase ausG modifies austinolide to austinol. Austinol is further acetylated to austin by the O-acetyltransferase ausP, which spontaneously changes to dehydroaustin. The cytochrome P450 monooxygenase ausR then converts dehydroaustin is into 7-dehydrodehydroaustin. The hydroxylation catalyzed by ausR permits the O-acetyltransferase ausQ to add an additional acetyl group to the molecule, leading to the formation of acetoxydehydroaustin. The short chain dehydrogenase ausT catalyzes the reduction of the double bond present between carbon atoms 1 and 2 to convert 7-dehydrodehydroaustin into 1,2-dihydro-7-hydroxydehydroaustin. AusQ catalyzes not only an acetylation reaction but also the addition of the PKS ausV diketide product to 1,2-dihydro-7-hydroxydehydroaustin, forming precalidodehydroaustin. Finally, the iron/alpha-ketoglutarate-dependent dioxygenase converts precalidodehydroaustin into calidodehydroaustin. This is Short chain dehydrogenase ausT from Aspergillus calidoustus.